Reading from the N-terminus, the 492-residue chain is Asparagine--tRNA ligase, mitochondrial (492 aa).

This sequence belongs to the class-II aminoacyl-tRNA synthetase family.

The protein localises to the mitochondrion matrix. It catalyses the reaction tRNA(Asn) + L-asparagine + ATP = L-asparaginyl-tRNA(Asn) + AMP + diphosphate + H(+). Catalyzes the attachment of asparagine to tRNA(Asn) in the mitochondrion. The chain is Asparagine--tRNA ligase, mitochondrial (SLM5) from Saccharomyces cerevisiae (strain ATCC 204508 / S288c) (Baker's yeast).